The following is a 349-amino-acid chain: Bifunctional nitrilase/nitrile hydratase NIT4A (349 aa).

The region spanning 29–301 (VRATVVQAST…EALISADLDL (273 aa)) is the CN hydrolase domain. Glutamate 69 (proton acceptor) is an active-site residue. Lysine 156 is a catalytic residue. Cysteine 190 serves as the catalytic Nucleophile.

The protein belongs to the carbon-nitrogen hydrolase superfamily. Nitrilase family. Ubiquitous.

It carries out the reaction L-asparagine = 3-cyano-L-alanine + H2O. It catalyses the reaction 3-cyano-L-alanine + 2 H2O = L-aspartate + NH4(+). Involved in the cyanide detoxification pathway. Has nitrilase and nitrile-hydratase activity in the ratio 4.0:1, producing both asparagine and aspartic acid from beta-cyano-L-alanine (Ala(CN)). Can also use 3-phenylpropionitrile as substrate, but not indole-3-acetonitrile. In Lupinus angustifolius (Narrow-leaved blue lupine), this protein is Bifunctional nitrilase/nitrile hydratase NIT4A (NIT4A).